The following is a 250-amino-acid chain: Global transcriptional regulator CodY (250 aa).

The tract at residues 1–146 (MTLLEKTRKL…GATVVGLEIL (146 aa)) is GAF domain. A DNA-binding region (H-T-H motif) is located at residues 194–213 (ASKIADKVGITRSVIVNALR).

Belongs to the CodY family.

Its subcellular location is the cytoplasm. In terms of biological role, DNA-binding global transcriptional regulator which is involved in the adaptive response to starvation and acts by directly or indirectly controlling the expression of numerous genes in response to nutrient availability. During rapid exponential growth, CodY is highly active and represses genes whose products allow adaptation to nutrient depletion. This is Global transcriptional regulator CodY from Caldanaerobacter subterraneus subsp. tengcongensis (strain DSM 15242 / JCM 11007 / NBRC 100824 / MB4) (Thermoanaerobacter tengcongensis).